A 443-amino-acid chain; its full sequence is Trimethylamine monooxygenase (443 aa).

FAD is bound by residues Asp-37, Gln-39, Leu-45, and Trp-46. NADP(+) contacts are provided by Trp-70 and Asn-72. FAD is bound by residues Asn-72 and Val-125. 5 residues coordinate NADP(+): Tyr-170, Ser-202, Ser-203, Ser-205, and Arg-226. FAD contacts are provided by Gln-315 and Thr-318. Residue Arg-409 coordinates NADP(+).

Belongs to the FMO family. The cofactor is FAD.

It catalyses the reaction trimethylamine + NADPH + O2 = trimethylamine N-oxide + NADP(+) + H2O. Its function is as follows. Catalyzes the oxidation of trimethylamine (TMA) to produce trimethylamine N-oxide (TMAO). In vitro, has a broad substrate specificity, oxidizing many nitrogen- and sulfur-containing compounds, including dimethylamine (DMA), dimethylsulfide (DMS) and dimethylsulfoxide (DMSO). The protein is Trimethylamine monooxygenase of Pelagibacter ubique (strain HTCC1002).